A 194-amino-acid polypeptide reads, in one-letter code: HTH-type transcriptional regulator BetI (194 aa).

The HTH tetR-type domain occupies Pro-8–Leu-68. Residues Thr-31–Phe-50 constitute a DNA-binding region (H-T-H motif).

It participates in amine and polyamine biosynthesis; betaine biosynthesis via choline pathway [regulation]. Functionally, repressor involved in the biosynthesis of the osmoprotectant glycine betaine. It represses transcription of the choline transporter BetT and the genes of BetAB involved in the synthesis of glycine betaine. The sequence is that of HTH-type transcriptional regulator BetI from Brucella anthropi (strain ATCC 49188 / DSM 6882 / CCUG 24695 / JCM 21032 / LMG 3331 / NBRC 15819 / NCTC 12168 / Alc 37) (Ochrobactrum anthropi).